Here is a 600-residue protein sequence, read N- to C-terminus: MEFKIIAEYFDRLEKISSRLQLTSLLADLFKKTDKNVIDKVVYIIQGKLWPDFLGMPELGIGEKFLIRALSIATSVSDDEIEKMYKSVGDLGQVAFDIKQKQQSASILAFLGAQKASKPLTVEKVYDDLAKVATSTGEGSRDIKIRLLAGLLKDASPLEAKYLVRFVDGRLRVGIGDATILDALAITFGGGQNFRPIVERAYNLRADLGNIAKILANGGIEQLKNIKPQPGIPIRPMLAERLSDPAEMLSKVGNIALVDYKYDGERGQIHKAGDKIFIFSRRLENITNQYPDVAEYISKYVKGNEFIVEGEIIPVDPETGEMRPFQELMHRKRKSDIHEAIKEYPVNVFLFDLMYYEGEDYTVKPLSERRKKLESIVEDNDYVHIATHIITDNVEKLKEFFYQAISEGAEGVMVKSLAPDAIYQAGSRGWLWIKFKRDYQSEMADTVDLVMVGAFHGKGRKGGKYSSFLMAAYNPDKDVFETVCKVASGFTDAELDDLQKKIAELKRDTPHPRVVSTMVPDVWLTPALVAEIIGAEITISPLHTCCKDQYAEGGLSIRFPRFIRWRPDKSPEDATTNREILEMYKSQLKKIEEKPSDQSV.

Residue aspartate 259 participates in ATP binding. Lysine 261 (N6-AMP-lysine intermediate) is an active-site residue. ATP is bound by residues arginine 266, arginine 281, glutamate 311, phenylalanine 351, arginine 428, and lysine 434.

Belongs to the ATP-dependent DNA ligase family. It depends on Mg(2+) as a cofactor.

The catalysed reaction is ATP + (deoxyribonucleotide)n-3'-hydroxyl + 5'-phospho-(deoxyribonucleotide)m = (deoxyribonucleotide)n+m + AMP + diphosphate.. Its function is as follows. DNA ligase that seals nicks in double-stranded DNA during DNA replication, DNA recombination and DNA repair. The polypeptide is DNA ligase (Acidianus ambivalens (Desulfurolobus ambivalens)).